The sequence spans 438 residues: Lipoyl synthase, mitochondrial (438 aa).

The transit peptide at 1 to 31 (MAASARGLRTLQSAHSSTTVPRLQLAVSRCY) directs the protein to the mitochondrion. Low complexity predominate over residues 34 to 57 (TTSPDPPITNSSNSSNSSNSTPTP). A disordered region spans residues 34 to 58 (TTSPDPPITNSSNSSNSSNSTPTPK). Residues cysteine 148, cysteine 153, cysteine 159, cysteine 179, cysteine 183, cysteine 186, and serine 394 each coordinate [4Fe-4S] cluster. In terms of domain architecture, Radical SAM core spans 162-383 (GSSKSAATAT…KERALEMGFL (222 aa)).

This sequence belongs to the radical SAM superfamily. Lipoyl synthase family. [4Fe-4S] cluster is required as a cofactor.

It is found in the mitochondrion. It carries out the reaction [[Fe-S] cluster scaffold protein carrying a second [4Fe-4S](2+) cluster] + N(6)-octanoyl-L-lysyl-[protein] + 2 oxidized [2Fe-2S]-[ferredoxin] + 2 S-adenosyl-L-methionine + 4 H(+) = [[Fe-S] cluster scaffold protein] + N(6)-[(R)-dihydrolipoyl]-L-lysyl-[protein] + 4 Fe(3+) + 2 hydrogen sulfide + 2 5'-deoxyadenosine + 2 L-methionine + 2 reduced [2Fe-2S]-[ferredoxin]. Its pathway is protein modification; protein lipoylation via endogenous pathway; protein N(6)-(lipoyl)lysine from octanoyl-[acyl-carrier-protein]: step 2/2. In terms of biological role, catalyzes the radical-mediated insertion of two sulfur atoms into the C-6 and C-8 positions of the octanoyl moiety bound to the lipoyl domains of lipoate-dependent enzymes, thereby converting the octanoylated domains into lipoylated derivatives. The chain is Lipoyl synthase, mitochondrial from Paracoccidioides brasiliensis (strain Pb18).